The primary structure comprises 129 residues: Small ribosomal subunit protein uS8 (129 aa).

It belongs to the universal ribosomal protein uS8 family. Part of the 30S ribosomal subunit. Contacts proteins S5 and S12.

Its function is as follows. One of the primary rRNA binding proteins, it binds directly to 16S rRNA central domain where it helps coordinate assembly of the platform of the 30S subunit. The protein is Small ribosomal subunit protein uS8 of Bdellovibrio bacteriovorus (strain ATCC 15356 / DSM 50701 / NCIMB 9529 / HD100).